Reading from the N-terminus, the 135-residue chain is Small ribosomal subunit protein uS11 (135 aa).

Over residues methionine 1–valine 11 the composition is skewed to low complexity. A disordered region spans residues methionine 1–valine 22.

This sequence belongs to the universal ribosomal protein uS11 family. In terms of assembly, part of the 30S ribosomal subunit. Interacts with proteins S7 and S18. Binds to IF-3.

Located on the platform of the 30S subunit, it bridges several disparate RNA helices of the 16S rRNA. Forms part of the Shine-Dalgarno cleft in the 70S ribosome. This is Small ribosomal subunit protein uS11 from Salinispora tropica (strain ATCC BAA-916 / DSM 44818 / JCM 13857 / NBRC 105044 / CNB-440).